A 425-amino-acid polypeptide reads, in one-letter code: Tyrosine--tRNA ligase (425 aa).

Tyr37 contacts L-tyrosine. Positions 42–51 match the 'HIGH' region motif; that stretch reads PTADSLHLGH. L-tyrosine contacts are provided by Tyr174 and Gln178. Residues 234-238 carry the 'KMSKS' region motif; sequence KFGKS. ATP is bound at residue Lys237. In terms of domain architecture, S4 RNA-binding spans 357–422; that stretch reads DGLIDALAAS…RGKKLYALLV (66 aa).

This sequence belongs to the class-I aminoacyl-tRNA synthetase family. TyrS type 1 subfamily. Homodimer.

The protein localises to the cytoplasm. The enzyme catalyses tRNA(Tyr) + L-tyrosine + ATP = L-tyrosyl-tRNA(Tyr) + AMP + diphosphate + H(+). In terms of biological role, catalyzes the attachment of tyrosine to tRNA(Tyr) in a two-step reaction: tyrosine is first activated by ATP to form Tyr-AMP and then transferred to the acceptor end of tRNA(Tyr). The protein is Tyrosine--tRNA ligase of Laribacter hongkongensis (strain HLHK9).